The following is a 602-amino-acid chain: RecBCD enzyme subunit RecD (602 aa).

171–178 (GGPGTGKT) lines the ATP pocket.

The protein belongs to the RecD family. As to quaternary structure, heterotrimer of RecB, RecC and RecD. All subunits contribute to DNA-binding.

The catalysed reaction is Couples ATP hydrolysis with the unwinding of duplex DNA at the replication fork by translocating in the 5'-3' direction. This creates two antiparallel DNA single strands (ssDNA). The leading ssDNA polymer is the template for DNA polymerase III holoenzyme which synthesizes a continuous strand.. It carries out the reaction ATP + H2O = ADP + phosphate + H(+). Functionally, a helicase/nuclease that prepares dsDNA breaks (DSB) for recombinational DNA repair. Binds to DSBs and unwinds DNA via a highly rapid and processive ATP-dependent bidirectional helicase activity. Unwinds dsDNA until it encounters a Chi (crossover hotspot instigator) sequence from the 3' direction. Cuts ssDNA a few nucleotides 3' to the Chi site. The properties and activities of the enzyme are changed at Chi. The Chi-altered holoenzyme produces a long 3'-ssDNA overhang and facilitates RecA-binding to the ssDNA for homologous DNA recombination and repair. Holoenzyme degrades any linearized DNA that is unable to undergo homologous recombination. In the holoenzyme this subunit has ssDNA-dependent ATPase and 5'-3' helicase activity. When added to pre-assembled RecBC greatly stimulates nuclease activity and augments holoenzyme processivity. Negatively regulates the RecA-loading ability of RecBCD. This Buchnera aphidicola subsp. Acyrthosiphon pisum (strain APS) (Acyrthosiphon pisum symbiotic bacterium) protein is RecBCD enzyme subunit RecD.